The primary structure comprises 599 residues: Elongation factor 4 (599 aa).

Positions 5–187 (SHIRNFSIIA…RLVHTIPAPV (183 aa)) constitute a tr-type G domain. GTP contacts are provided by residues 17–22 (DHGKST) and 134–137 (NKMD).

The protein belongs to the TRAFAC class translation factor GTPase superfamily. Classic translation factor GTPase family. LepA subfamily.

Its subcellular location is the cell inner membrane. It carries out the reaction GTP + H2O = GDP + phosphate + H(+). In terms of biological role, required for accurate and efficient protein synthesis under certain stress conditions. May act as a fidelity factor of the translation reaction, by catalyzing a one-codon backward translocation of tRNAs on improperly translocated ribosomes. Back-translocation proceeds from a post-translocation (POST) complex to a pre-translocation (PRE) complex, thus giving elongation factor G a second chance to translocate the tRNAs correctly. Binds to ribosomes in a GTP-dependent manner. In Pseudomonas putida (strain W619), this protein is Elongation factor 4.